A 382-amino-acid polypeptide reads, in one-letter code: Gibberellin 2-beta-dioxygenase 1 (382 aa).

The 133-residue stretch at Asp-189–Pro-321 folds into the Fe2OG dioxygenase domain. Position 199 (Tyr-199) interacts with 2-oxoglutarate. Fe cation is bound by residues His-241, Asp-243, and His-302. 2 residues coordinate 2-oxoglutarate: Arg-312 and Ser-314.

This sequence belongs to the iron/ascorbate-dependent oxidoreductase family. GA2OX subfamily. Requires L-ascorbate as cofactor. The cofactor is Fe(2+). In terms of tissue distribution, expressed in roots, shoot apex, and in the basal region of leaf primordia and young leaves.

It carries out the reaction gibberellin A1 + 2-oxoglutarate + O2 = gibberellin A8 + succinate + CO2. Catalyzes the 2-beta-hydroxylation of several biologically active gibberellins, leading to the homeostatic regulation of their endogenous level. Catabolism of gibberellins (GAs) plays a central role in plant development. Controls the level of bioactive GAs in the shoot apical meristem, which regulates the vegetative to reproductive phase transition. In vitro, converts GA1, GA4, GA9, GA20, and GA44 to the corresponding 2-beta-hydroxylated products GA8, GA34, GA51, GA29, and GA98, respectively. The sequence is that of Gibberellin 2-beta-dioxygenase 1 from Oryza sativa subsp. japonica (Rice).